A 752-amino-acid chain; its full sequence is Myb-related protein A (752 aa).

The interval 1–22 is disordered; sequence MAKRSRSEDEDDDLQYADHDYE. 3 HTH myb-type domains span residues 30 to 81, 82 to 137, and 138 to 188; these read KKLW…QKVL, NPEL…NPEV, and KKSS…RRKV. 3 DNA-binding regions (H-T-H motif) span residues 58–81, 110–133, and 161–184; these read WTLI…QKVL, WSLI…HNHL, and WAEI…NSTM. A Glycyl lysine isopeptide (Lys-Gly) (interchain with G-Cter in SUMO2) cross-link involves residue Lys-199. Residues 230–295 are transcriptional activation domain; the sequence is IPGYQYVSPE…RIPSQPGSFS (66 aa). The tract at residues 298-553 is negative regulatory domain; that stretch reads SGSFLMDDNM…IRRSILGTTP (256 aa). The residue at position 394 (Lys-394) is an N6-acetyllysine. The interval 451–480 is disordered; sequence RKMRVGHSPGSELRDGSLNDGGNMALKHTP. Glycyl lysine isopeptide (Lys-Gly) (interchain with G-Cter in SUMO2) cross-links involve residues Lys-592 and Lys-602.

As to quaternary structure, component of the DREAM complex (also named LINC complex) at least composed of E2F4, E2F5, LIN9, LIN37, LIN52, LIN54, MYBL1, MYBL2, RBL1, RBL2, RBBP4, TFDP1 and TFDP2. The complex exists in quiescent cells where it represses cell cycle-dependent genes. It dissociates in S phase when LIN9, LIN37, LIN52 and LIN54 form a subcomplex that binds to MYBL2. As to expression, expressed in a variety of lymphoid and solid tumor lines cultured in vitro.

It is found in the nucleus. Transcription factor that specifically recognizes the sequence 5'-YAAC[GT]G-3'. Acts as a master regulator of male meiosis by promoting expression of piRNAs: activates expression of both piRNA precursor RNAs and expression of protein-coding genes involved in piRNA metabolism. The piRNA metabolic process mediates the repression of transposable elements during meiosis by forming complexes composed of piRNAs and Piwi proteins and governs the methylation and subsequent repression of transposons, which is essential for the germline integrity. Transcriptional activator of SOX30. The sequence is that of Myb-related protein A (MYBL1) from Homo sapiens (Human).